The chain runs to 164 residues: Flavodoxin (164 aa).

The Flavodoxin-like domain maps to 4–160 (IGIFFGTDSG…RISKWVEQVK (157 aa)).

It belongs to the flavodoxin family. It depends on FMN as a cofactor.

Its function is as follows. Low-potential electron donor to a number of redox enzymes. The chain is Flavodoxin (fldA) from Helicobacter pylori (strain ATCC 700392 / 26695) (Campylobacter pylori).